Reading from the N-terminus, the 372-residue chain is NADH-quinone oxidoreductase subunit H (372 aa).

The next 8 helical transmembrane spans lie at 34–54 (LPLG…LYAL), 106–126 (FLFV…FAVL), 139–159 (VGLF…LAAG), 178–198 (IVSY…MAGT), 217–237 (FFLF…IASL), 269–289 (VIFL…AIVF), 313–333 (VWGA…QMWL), and 352–372 (VLTP…IYVP).

The protein belongs to the complex I subunit 1 family. NDH-1 is composed of 14 different subunits. Subunits NuoA, H, J, K, L, M, N constitute the membrane sector of the complex.

It localises to the cell inner membrane. It catalyses the reaction a quinone + NADH + 5 H(+)(in) = a quinol + NAD(+) + 4 H(+)(out). NDH-1 shuttles electrons from NADH, via FMN and iron-sulfur (Fe-S) centers, to quinones in the respiratory chain. The immediate electron acceptor for the enzyme in this species is believed to be ubiquinone. Couples the redox reaction to proton translocation (for every two electrons transferred, four hydrogen ions are translocated across the cytoplasmic membrane), and thus conserves the redox energy in a proton gradient. This subunit may bind ubiquinone. The chain is NADH-quinone oxidoreductase subunit H from Chlorobium luteolum (strain DSM 273 / BCRC 81028 / 2530) (Pelodictyon luteolum).